The primary structure comprises 115 residues: Non-specific lipid-transfer protein 4.3 (115 aa).

Residues 1-25 form the signal peptide; sequence MARAAATQLVLVAMVAAMLLVATDA. 4 disulfides stabilise this stretch: Cys-29/Cys-77, Cys-39/Cys-54, Cys-55/Cys-97, and Cys-75/Cys-111.

Belongs to the plant LTP family.

Plant non-specific lipid-transfer proteins transfer phospholipids as well as galactolipids across membranes. May play a role in wax or cutin deposition in the cell walls of expanding epidermal cells and certain secretory tissues. The polypeptide is Non-specific lipid-transfer protein 4.3 (LTP4.3) (Hordeum vulgare (Barley)).